Here is a 464-residue protein sequence, read N- to C-terminus: F-box/FBD/LRR-repeat protein At1g80470 (464 aa).

In terms of domain architecture, F-box spans 15-62 (DWISGLADDLLLQILSKVPTRESVFTSRMSKRWRNLWRHVPALDLDSS). 6 LRR repeats span residues 96-122 (EEHC…TILS), 123-150 (KVNI…TLYS), 152-178 (VFDA…KFDG), 197-222 (IITH…KLES), 223-249 (MRED…SITD), and 273-298 (DAED…TISA). The 55-residue stretch at 359-413 (KEEINLSLVPHCFESSLEYVQLKVPITVSETSSKMELAIYFVRNCSVLKKLMLNE) folds into the FBD domain.

The sequence is that of F-box/FBD/LRR-repeat protein At1g80470 from Arabidopsis thaliana (Mouse-ear cress).